The sequence spans 235 residues: Carbonic anhydrase 1 (235 aa).

The Alpha-carbonic anhydrase domain occupies 1–235 (GNKQSPVDIK…LKGRTVKASF (235 aa)). His40 (proton donor/acceptor) is an active-site residue. His69, His71, and His94 together coordinate Zn(2+). Residues Thr174 and 174-175 (TH) each bind substrate.

The protein belongs to the alpha-carbonic anhydrase family. The cofactor is Zn(2+).

The protein localises to the cytoplasm. The enzyme catalyses hydrogencarbonate + H(+) = CO2 + H2O. It catalyses the reaction urea = cyanamide + H2O. Its activity is regulated as follows. Inhibited by acetazolamide. In terms of biological role, catalyzes the reversible hydration of carbon dioxide. Can hydrate cyanamide to urea. The protein is Carbonic anhydrase 1 (CA1) of Oryctolagus cuniculus (Rabbit).